Consider the following 138-residue polypeptide: Large-conductance mechanosensitive channel (138 aa).

Transmembrane regions (helical) follow at residues 19–39 (VGVI…GDVI) and 81–101 (GSFL…FLVI).

Belongs to the MscL family. Homopentamer.

The protein localises to the cell inner membrane. Functionally, channel that opens in response to stretch forces in the membrane lipid bilayer. May participate in the regulation of osmotic pressure changes within the cell. The chain is Large-conductance mechanosensitive channel from Bradyrhizobium diazoefficiens (strain JCM 10833 / BCRC 13528 / IAM 13628 / NBRC 14792 / USDA 110).